Reading from the N-terminus, the 495-residue chain is UDP-N-acetylmuramate--L-alanine ligase (495 aa).

153–159 contributes to the ATP binding site; it reads GTHGKTT.

This sequence belongs to the MurCDEF family.

It localises to the cytoplasm. The catalysed reaction is UDP-N-acetyl-alpha-D-muramate + L-alanine + ATP = UDP-N-acetyl-alpha-D-muramoyl-L-alanine + ADP + phosphate + H(+). It functions in the pathway cell wall biogenesis; peptidoglycan biosynthesis. In terms of biological role, cell wall formation. This is UDP-N-acetylmuramate--L-alanine ligase from Gloeothece citriformis (strain PCC 7424) (Cyanothece sp. (strain PCC 7424)).